We begin with the raw amino-acid sequence, 66 residues long: MAFLKKSLFLVLFLGLVSLSICDEEKRQDEDDDDDDDEEKRGVFDIIKDAGRQLVAHAMGKIAEKV.

The signal sequence occupies residues 1–22; the sequence is MAFLKKSLFLVLFLGLVSLSIC. Positions 23 to 39 are excised as a propeptide; that stretch reads DEEKRQDEDDDDDDDEE. Valine amide is present on Val-66.

Expressed by the skin glands.

It is found in the secreted. In terms of biological role, has antibacterial activity against Gram-negative bacterium E.coli ATCC 25922 (MIC=300 uM) but not against S.pneumoniae ATCC 700603, S.choleraesuis ATCC 14028 or Gram-positive bacterium S.aureus ATCC 29313. Shows very little hemolytic activity and no cytotoxicity. The chain is Ocellatin-PT5 from Leptodactylus pustulatus (Ceara white-lipped frog).